A 353-amino-acid polypeptide reads, in one-letter code: C-X-C chemokine receptor type 4 (353 aa).

The interval 1–22 is important for chemokine binding and signaling; that stretch reads MDGFRIYPSDNYTEDDLGSGDY. Residues 1–39 are Extracellular-facing; sequence MDGFRIYPSDNYTEDDLGSGDYDSMKEPCFREENAHFNR. Tyrosine 7 is modified (sulfotyrosine). The N-linked (GlcNAc...) asparagine glycan is linked to asparagine 11. Tyrosine 12 carries the post-translational modification Sulfotyrosine. Serine 19 carries an O-linked (Xyl...) (chondroitin sulfate) serine glycan. Residue tyrosine 22 is modified to Sulfotyrosine. Intrachain disulfides connect cysteine 29–cysteine 275 and cysteine 110–cysteine 187. Residues 40 to 64 traverse the membrane as a helical segment; it reads IFLPTVYSIIFLTGIVGNGLVILVM. Residues 65–78 lie on the Cytoplasmic side of the membrane; it reads GYQKKLRSMTDKYR. The helical transmembrane segment at 79 to 100 threads the bilayer; that stretch reads LHLSVADLLFVLTLPFWAVDAV. Residues 95–98 are chemokine binding; sequence WAVD. The Extracellular portion of the chain corresponds to 101-111; the sequence is ANWYFGKFLCK. Residues 112–131 traverse the membrane as a helical segment; the sequence is AVHVIYTVNLYSSVLILAFI. The chemokine binding stretch occupies residues 114-118; the sequence is HVIYT. The Cytoplasmic segment spans residues 132-155; the sequence is SLDRYLAIVHATNSQRPRKLLAEK. The Important for signaling signature appears at 134–136; it reads DRY. The segment at 136–148 is involved in dimerization; when bound to chemokine; the sequence is YLAIVHATNSQRP. Residues 156 to 175 traverse the membrane as a helical segment; the sequence is VVYVGVWIPALLLTIPDFIF. The Extracellular portion of the chain corresponds to 176–196; sequence ANVREADGRYICDRFYPSDSW. The segment at 187–191 is chemokine binding, important for signaling; the sequence is CDRFY. The tract at residues 192–211 is involved in dimerization; sequence PSDSWLVVFQFQHIMVGLIL. A helical membrane pass occupies residues 197 to 217; sequence LVVFQFQHIMVGLILPGIVIL. Residues 218–242 are Cytoplasmic-facing; sequence SCYCIIISKLSHSKGYQKRKALKTT. A helical transmembrane segment spans residues 243-262; it reads VILILAFFACWLPYYIGISI. At 263 to 283 the chain is on the extracellular side; that stretch reads DSFILLEIIKQGCEFESTVHK. The tract at residues 267 to 269 is involved in dimerization; sequence LLE. Residues 284-303 form a helical membrane-spanning segment; sequence WISITEALAFFHCCLNPILY. Over 304-353 the chain is Cytoplasmic; it reads AFLGAKFKTSAQHALTSVSRGSSLKILSKGKRGGHSSVSTESESSSFHSS. Serine 320 and serine 322 each carry phosphoserine. Residues serine 325 and serine 326 each carry the phosphoserine; by PKC and GRK6 modification. The segment at 330–353 is disordered; that stretch reads LSKGKRGGHSSVSTESESSSFHSS. Serine 331 carries the post-translational modification Phosphoserine; by GRK6. Lysine 332 is covalently cross-linked (Glycyl lysine isopeptide (Lys-Gly) (interchain with G-Cter in ubiquitin)). Residues 338 to 353 are compositionally biased toward low complexity; that stretch reads HSSVSTESESSSFHSS. Residue serine 340 is modified to Phosphoserine; by GRK6. Phosphoserine occurs at positions 349 and 352.

Belongs to the G-protein coupled receptor 1 family. As to quaternary structure, monomer. Can form homodimers. Interacts with CD164. Interacts with ARRB2; the interaction is dependent on the C-terminal phosphorylation of CXCR4 and allows activation of MAPK1 and MAPK3. Interacts with ARR3; the interaction is dependent on the C-terminal phosphorylation of CXCR4 and modulates calcium mobilization. Interacts with RNF113A; the interaction, enhanced by CXCL12, promotes CXCR4 ubiquitination and subsequent degradation. Interacts (via the cytoplasmic C-terminal) with ITCH (via the WW domains I and II); the interaction, enhanced by CXCL12, promotes CXCR4 ubiquitination and leads to its degradation. Interacts with extracellular ubiquitin. Interacts with DBN1; this interaction is enhanced by antigenic stimulation. Following LPS binding, may form a complex with GDF5, HSP90AA1 and HSPA8. In terms of processing, phosphorylated on agonist stimulation. Rapidly phosphorylated on serine and threonine residues in the C-terminal. Phosphorylation at Ser-325 and Ser-326 leads to recruitment of ITCH, ubiquitination and protein degradation. Post-translationally, ubiquitinated after ligand binding, leading to its degradation. Ubiquitinated by ITCH at the cell membrane on agonist stimulation. The ubiquitin-dependent mechanism, endosomal sorting complex required for transport (ESCRT), then targets CXCR4 for lysosomal degradation. This process is dependent also on prior Ser-/Thr-phosphorylation in the C-terminal of CXCR4. Also binding of ARRB1 to STAM negatively regulates CXCR4 sorting to lysosomes though modulating ubiquitination of SFR5S. Sulfation is required for efficient binding of CXCL12/SDF-1alpha and promotes its dimerization. In terms of processing, O- and N-glycosylated. N-glycosylation can mask coreceptor function. The O-glycosylation chondroitin sulfate attachment does not affect interaction with CXCL12/SDF-1alpha nor its coreceptor activity.

It is found in the cell membrane. It localises to the cell junction. The protein resides in the early endosome. The protein localises to the late endosome. Its subcellular location is the lysosome. In terms of biological role, receptor for the C-X-C chemokine CXCL12/SDF-1 that transduces a signal by increasing intracellular calcium ion levels and enhancing MAPK1/MAPK3 activation. Involved in the AKT signaling cascade. Plays a role in regulation of cell migration, e.g. during wound healing. Acts as a receptor for extracellular ubiquitin; leading to enhanced intracellular calcium ions and reduced cellular cAMP levels. Binds bacterial lipopolysaccharide (LPS) et mediates LPS-induced inflammatory response, including TNF secretion by monocytes. Involved in hematopoiesis and in cardiac ventricular septum formation. Also plays an essential role in vascularization of the gastrointestinal tract, probably by regulating vascular branching and/or remodeling processes in endothelial cells. Involved in cerebellar development. In the CNS, could mediate hippocampal-neuron survival. The polypeptide is C-X-C chemokine receptor type 4 (CXCR4) (Felis catus (Cat)).